Reading from the N-terminus, the 304-residue chain is Acetaldehyde dehydrogenase 1 (304 aa).

Cys-131 functions as the Acyl-thioester intermediate in the catalytic mechanism. Residues 162 to 170 and Asn-273 contribute to the NAD(+) site; that span reads SAGPGTRKN.

It belongs to the acetaldehyde dehydrogenase family.

The enzyme catalyses acetaldehyde + NAD(+) + CoA = acetyl-CoA + NADH + H(+). This Dechloromonas aromatica (strain RCB) protein is Acetaldehyde dehydrogenase 1.